The following is a 498-amino-acid chain: Glycerol kinase (498 aa).

Thr12 is a binding site for ADP. Residues Thr12, Thr13, and Ser14 each contribute to the ATP site. A sn-glycerol 3-phosphate-binding site is contributed by Thr12. Arg16 contributes to the ADP binding site. Sn-glycerol 3-phosphate is bound by residues Arg82, Glu83, Tyr134, and Asp243. Glycerol is bound by residues Arg82, Glu83, Tyr134, Asp243, and Gln244. ADP contacts are provided by Thr265 and Gly308. Thr265, Gly308, Gln312, and Gly409 together coordinate ATP. ADP-binding residues include Gly409 and Asn413.

The protein belongs to the FGGY kinase family. As to quaternary structure, homotetramer and homodimer (in equilibrium).

It catalyses the reaction glycerol + ATP = sn-glycerol 3-phosphate + ADP + H(+). Its pathway is polyol metabolism; glycerol degradation via glycerol kinase pathway; sn-glycerol 3-phosphate from glycerol: step 1/1. Its activity is regulated as follows. Activated by phosphorylation and inhibited by fructose 1,6-bisphosphate (FBP). Functionally, key enzyme in the regulation of glycerol uptake and metabolism. Catalyzes the phosphorylation of glycerol to yield sn-glycerol 3-phosphate. This Clostridium botulinum (strain 657 / Type Ba4) protein is Glycerol kinase.